Here is a 195-residue protein sequence, read N- to C-terminus: Peptidyl-tRNA hydrolase (195 aa).

Residue Y17 coordinates tRNA. Residue H22 is the Proton acceptor of the active site. TRNA is bound by residues F68, N70, and N116.

It belongs to the PTH family. In terms of assembly, monomer.

Its subcellular location is the cytoplasm. It catalyses the reaction an N-acyl-L-alpha-aminoacyl-tRNA + H2O = an N-acyl-L-amino acid + a tRNA + H(+). Hydrolyzes ribosome-free peptidyl-tRNAs (with 1 or more amino acids incorporated), which drop off the ribosome during protein synthesis, or as a result of ribosome stalling. In terms of biological role, catalyzes the release of premature peptidyl moieties from peptidyl-tRNA molecules trapped in stalled 50S ribosomal subunits, and thus maintains levels of free tRNAs and 50S ribosomes. The protein is Peptidyl-tRNA hydrolase of Shewanella denitrificans (strain OS217 / ATCC BAA-1090 / DSM 15013).